The sequence spans 623 residues: tRNA uridine 5-carboxymethylaminomethyl modification enzyme MnmG (623 aa).

Residue 12–17 coordinates FAD; sequence GAGHAG. An NAD(+)-binding site is contributed by 272–286; that stretch reads GPRYCPSIEDKINRF.

Belongs to the MnmG family. In terms of assembly, homodimer. Heterotetramer of two MnmE and two MnmG subunits. FAD is required as a cofactor.

Its subcellular location is the cytoplasm. Functionally, NAD-binding protein involved in the addition of a carboxymethylaminomethyl (cmnm) group at the wobble position (U34) of certain tRNAs, forming tRNA-cmnm(5)s(2)U34. The protein is tRNA uridine 5-carboxymethylaminomethyl modification enzyme MnmG of Flavobacterium psychrophilum (strain ATCC 49511 / DSM 21280 / CIP 103535 / JIP02/86).